Here is a 332-residue protein sequence, read N- to C-terminus: Phosphate acyltransferase (332 aa).

It belongs to the PlsX family. Homodimer. Probably interacts with PlsY.

Its subcellular location is the cytoplasm. The catalysed reaction is a fatty acyl-[ACP] + phosphate = an acyl phosphate + holo-[ACP]. It functions in the pathway lipid metabolism; phospholipid metabolism. Functionally, catalyzes the reversible formation of acyl-phosphate (acyl-PO(4)) from acyl-[acyl-carrier-protein] (acyl-ACP). This enzyme utilizes acyl-ACP as fatty acyl donor, but not acyl-CoA. In Bacillus pumilus (strain SAFR-032), this protein is Phosphate acyltransferase.